Reading from the N-terminus, the 1006-residue chain is E3 ubiquitin-protein ligase MIB1 (1006 aa).

Residues 6 to 74 (NNRVMVEGVG…AYDLRILDSA (69 aa)) form the MIB/HERC2 1 domain. Residues 80–132 (HDGTMCDTCRQQPIIGIRWKCAECTNYDLCTVCYHGDKHHLRHRFYRITTPGS) form a ZZ-type zinc finger. 8 residues coordinate Zn(2+): Cys85, Cys88, Cys100, Cys103, Cys109, Cys112, His118, and His122. Positions 143–221 (SKKITARGIF…MSDLKCVQDA (79 aa)) constitute an MIB/HERC2 2 domain. At Ser408 the chain carries Phosphoserine. 9 ANK repeats span residues 430 to 460 (DLNE…DVNG), 463 to 492 (AGHT…DVEA), 496 to 525 (DGDR…DLNA), 529 to 558 (RRQT…HPSL), 562 to 591 (EGDT…DVTI), 595 to 627 (NGFN…IVDE), 631 to 661 (DGYT…NLDI), 665 to 694 (NQQT…KLDI), and 698 to 729 (DGDT…KVDA). RING-type zinc fingers lie at residues 819 to 854 (CMVC…LICK) and 866 to 901 (CVVC…VQCR). Residues 935 to 962 (QKDKDNTNVNADVQKLQQQLQDIKEQTM) are a coiled coil. An RING-type 3 zinc finger spans residues 963 to 996 (CPVCLDRLKNMIFLCGHGTCQLCGDRMSECPICR).

Interacts with CEP131 and PCM1. Ubiquitinated; this modification is inhibited in response to cellular stress, such as ultraviolet light (UV) radiation or heat shock. Ubiquitinated; possibly via autoubiquitination. In terms of tissue distribution, detected in all tissues tested. Present in embryo, embryonic stem cells, bladder, skeletal muscle, bladder, uterus, testis, stomach, colon, ileum, trachea, lung, aorta, kidney, spleen, liver and vas deferens (at protein level). Highly expressed in testis.

Its subcellular location is the cytoplasm. The protein resides in the cytoskeleton. It is found in the microtubule organizing center. It localises to the centrosome. The protein localises to the centriolar satellite. Its subcellular location is the cell membrane. It catalyses the reaction S-ubiquitinyl-[E2 ubiquitin-conjugating enzyme]-L-cysteine + [acceptor protein]-L-lysine = [E2 ubiquitin-conjugating enzyme]-L-cysteine + N(6)-ubiquitinyl-[acceptor protein]-L-lysine.. It participates in protein modification; protein ubiquitination. Functionally, E3 ubiquitin-protein ligase that mediates ubiquitination of Delta receptors, which act as ligands of Notch proteins. Positively regulates the Delta-mediated Notch signaling by ubiquitinating the intracellular domain of Delta, leading to endocytosis of Delta receptors. Involved in ubiquitination of centriolar satellite CEP131, CEP290 and PCM1 proteins and hence inhibits primary cilium formation in proliferating cells. Mediates 'Lys-63'-linked polyubiquitination of TBK1, which probably participates in kinase activation. Probably mediates ubiquitination and subsequent proteasomal degradation of DAPK1, thereby antagonizing anti-apoptotic effects of DAPK1 to promote TNF-induced apoptosis. This is E3 ubiquitin-protein ligase MIB1 (Mib1) from Mus musculus (Mouse).